Consider the following 144-residue polypeptide: Major allergen Blo t 12 (144 aa).

Residues 1-20 (MKSVLIFLVAIALFSANIVS) form the signal peptide. The disordered stretch occupies residues 24-77 (QTTRGRHTEPDDHHEKPTTQCTHEETTSTQHHHEEVVTTQTPHHEEKTTTEETH). Residues 92–144 (HVVCHEEGPIHIQEMCNKYIICSKSGSLWYITVMPCSIGTKFDPISRNCVLDN) enclose the Chitin-binding type-2 domain. An intrachain disulfide couples Cys127 to Cys140.

The polypeptide is Major allergen Blo t 12 (Blomia tropicalis (Mite)).